Reading from the N-terminus, the 162-residue chain is Large ribosomal subunit protein uL10 (162 aa).

The protein belongs to the universal ribosomal protein uL10 family. As to quaternary structure, part of the ribosomal stalk of the 50S ribosomal subunit. The N-terminus interacts with L11 and the large rRNA to form the base of the stalk. The C-terminus forms an elongated spine to which L12 dimers bind in a sequential fashion forming a multimeric L10(L12)X complex.

Forms part of the ribosomal stalk, playing a central role in the interaction of the ribosome with GTP-bound translation factors. In Aliarcobacter butzleri (strain RM4018) (Arcobacter butzleri), this protein is Large ribosomal subunit protein uL10.